A 492-amino-acid polypeptide reads, in one-letter code: E3 ubiquitin-protein ligase TRIM35 (492 aa).

The residue at position 1 (M1) is an N-acetylmethionine. 2 positions are modified to phosphoserine: S4 and S8. The RING-type zinc finger occupies 21-61 (CAVCYDPFRDAVTLRCGHNFCRGCVSRCWEVQVSPTCPVCK). The B box-type zinc-finger motif lies at 96–137 (RFSRVCRLHRGQLSLFCLEDKELLCCSCQADPRHQGHRVQPV). Zn(2+) contacts are provided by C101, H104, C123, and H129. Residues 210-249 (AEETRQKQLLADEKMKQLTEETEVLAHEIERLQMEMKEDD) adopt a coiled-coil conformation. In terms of domain architecture, B30.2/SPRY spans 283–486 (YLGSLQYRVW…LRICPLHISV (204 aa)).

As to quaternary structure, interacts with PKM isoform M2, but not isoform M1; this interaction may compete with that between PKM and FGFR1, and hence reduces FGFR1-dependent tyrosine phosphorylation of PKM. Interacts with IRF7; this interaction promotes IRF7 proteasomal degradation. Interacts with TRAF3; this interaction promotes TRAF3 activation.

The protein localises to the cytoplasm. The protein resides in the nucleus. It catalyses the reaction S-ubiquitinyl-[E2 ubiquitin-conjugating enzyme]-L-cysteine + [acceptor protein]-L-lysine = [E2 ubiquitin-conjugating enzyme]-L-cysteine + N(6)-ubiquitinyl-[acceptor protein]-L-lysine.. It participates in protein modification; protein ubiquitination. Functionally, E3 ubiquitin-protein ligase that participates in multiple biological processes including cell death, glucose metabolism, and in particular, the innate immune response. Mediates 'Lys-63'-linked polyubiquitination of TRAF3 thereby promoting type I interferon production via RIG-I signaling pathway. Can also catalyze 'Lys-48'-linked polyubiquitination and proteasomal degradation of viral proteins such as influenza virus PB2. Acts as a negative feedback regulator of TLR7- and TLR9-triggered signaling. Mechanistically, promotes the 'Lys-48'-linked ubiquitination of IRF7 and induces its degradation via a proteasome-dependent pathway. Reduces FGFR1-dependent tyrosine phosphorylation of PKM, inhibiting PKM-dependent lactate production, glucose metabolism, and cell growth. This is E3 ubiquitin-protein ligase TRIM35 (TRIM35) from Pongo abelii (Sumatran orangutan).